The following is a 515-amino-acid chain: MADSLAPLLPTHIEEDEDTSSPLTFDKILEKSLSDFGFSQFLQIVLVGLALTFDSQQIFITVFTDAYPTWHCLDHTICNPATTDICKIPRSAWDWDGGFKGKSVISEFDLECSSSFLRSLPSSTFYVGSIVGGVVLAMIPDGSLGRKQLLFFSSFAMSLTGISIFLSSNIWIYSFLKFVIGFARSQTGTYALVLISERISTKWRPRATMVPFTLFVLGFMSLSGIAYLVRHASWKVLYLCTSIPAGIHSIFIYFFALESPRWLHLEGKNKEAIEVLKRISPANRGYLESVSSRLRPKETLEQTSSYSIKDLFIIKWAFRRVTLVMIIMFGLGMSYYGVPLAVRDIKVNIYMSEALNAMVELPTFVVTPILLEQFSRRSSVLVNCLIGGASGVLCFVMSLYGRTKIAFALELGSFFCARIGFNLMAIYLVELFPTCVRNSATMMLRQALVVGGACCPLIASLGRNVPSLSFAVFGFAMSGLGLFALLLPETKGLSLCDTMEEQEQRDQALKTSHSC.

Over 1–43 (MADSLAPLLPTHIEEDEDTSSPLTFDKILEKSLSDFGFSQFLQ) the chain is Cytoplasmic. Residues 44–64 (IVLVGLALTFDSQQIFITVFT) traverse the membrane as a helical segment. Topologically, residues 65 to 124 (DAYPTWHCLDHTICNPATTDICKIPRSAWDWDGGFKGKSVISEFDLECSSSFLRSLPSST) are extracellular. Residues 125-145 (FYVGSIVGGVVLAMIPDGSLG) traverse the membrane as a helical segment. Over 146–149 (RKQL) the chain is Cytoplasmic. The helical transmembrane segment at 150–172 (LFFSSFAMSLTGISIFLSSNIWI) threads the bilayer. Residues 173 to 177 (YSFLK) are Extracellular-facing. The chain crosses the membrane as a helical span at residues 178–195 (FVIGFARSQTGTYALVLI). Residue 195–202 (ISERISTK) coordinates ATP. Topologically, residues 196-208 (SERISTKWRPRAT) are cytoplasmic. The chain crosses the membrane as a helical span at residues 209-229 (MVPFTLFVLGFMSLSGIAYLV). The Extracellular segment spans residues 230 to 235 (RHASWK). A helical membrane pass occupies residues 236-256 (VLYLCTSIPAGIHSIFIYFFA). Residues 257–320 (LESPRWLHLE…LFIIKWAFRR (64 aa)) are Cytoplasmic-facing. The helical transmembrane segment at 321–341 (VTLVMIIMFGLGMSYYGVPLA) threads the bilayer. The Extracellular portion of the chain corresponds to 342 to 350 (VRDIKVNIY). The chain crosses the membrane as a helical span at residues 351-371 (MSEALNAMVELPTFVVTPILL). At 372-379 (EQFSRRSS) the chain is on the cytoplasmic side. The helical transmembrane segment at 380-400 (VLVNCLIGGASGVLCFVMSLY) threads the bilayer. Residues 401-411 (GRTKIAFALEL) lie on the Extracellular side of the membrane. A helical transmembrane segment spans residues 412 to 432 (GSFFCARIGFNLMAIYLVELF). The Cytoplasmic portion of the chain corresponds to 433-441 (PTCVRNSAT). A helical transmembrane segment spans residues 442-462 (MMLRQALVVGGACCPLIASLG). Residues 463 to 467 (RNVPS) lie on the Extracellular side of the membrane. A helical transmembrane segment spans residues 468-488 (LSFAVFGFAMSGLGLFALLLP). Residues 489–515 (ETKGLSLCDTMEEQEQRDQALKTSHSC) lie on the Cytoplasmic side of the membrane.

The protein belongs to the major facilitator (TC 2.A.1) superfamily. Organic cation transporter (TC 2.A.1.19) family. Mostly expressed in leaves and siliques, and, to a lower extent, in roots, stems and flowers.

It is found in the vacuole membrane. Its function is as follows. High affinity carnitine transporter involved in the active cellular uptake of carnitine. Also transports organic cations. This Arabidopsis thaliana (Mouse-ear cress) protein is Organic cation/carnitine transporter 5 (OCT5).